A 264-amino-acid chain; its full sequence is Phosphonoacetaldehyde hydrolase (264 aa).

The active-site Nucleophile is the Asp9. 2 residues coordinate Mg(2+): Asp9 and Ala11. Residue Lys50 is the Schiff-base intermediate with substrate of the active site. A Mg(2+)-binding site is contributed by Asp183.

It belongs to the HAD-like hydrolase superfamily. PhnX family. Homodimer. Mg(2+) serves as cofactor.

The enzyme catalyses phosphonoacetaldehyde + H2O = acetaldehyde + phosphate + H(+). Functionally, involved in phosphonate degradation. In Bacillus cereus (strain AH187), this protein is Phosphonoacetaldehyde hydrolase.